The primary structure comprises 318 residues: Thymidylate synthase (318 aa).

DUMP-binding positions include arginine 25 and 180 to 181 (RR). The active-site Nucleophile is the cysteine 200. DUMP contacts are provided by residues 220-223 (RSGD), asparagine 231, and 261-263 (HIY). Aspartate 223 provides a ligand contact to (6R)-5,10-methylene-5,6,7,8-tetrahydrofolate. Alanine 317 serves as a coordination point for (6R)-5,10-methylene-5,6,7,8-tetrahydrofolate.

Belongs to the thymidylate synthase family. Bacterial-type ThyA subfamily. In terms of assembly, homodimer.

It localises to the cytoplasm. The enzyme catalyses dUMP + (6R)-5,10-methylene-5,6,7,8-tetrahydrofolate = 7,8-dihydrofolate + dTMP. Its pathway is pyrimidine metabolism; dTTP biosynthesis. Functionally, catalyzes the reductive methylation of 2'-deoxyuridine-5'-monophosphate (dUMP) to 2'-deoxythymidine-5'-monophosphate (dTMP) while utilizing 5,10-methylenetetrahydrofolate (mTHF) as the methyl donor and reductant in the reaction, yielding dihydrofolate (DHF) as a by-product. This enzymatic reaction provides an intracellular de novo source of dTMP, an essential precursor for DNA biosynthesis. The sequence is that of Thymidylate synthase from Bacillus cereus (strain ZK / E33L).